The following is a 1043-amino-acid chain: Isoleucine--tRNA ligase (1043 aa).

2 residues coordinate L-isoleucyl-5'-AMP: Pro46 and His57. The 'HIGH' region signature appears at 47 to 57 (PTANGLPHVGH). Residues Cys181 and Cys184 each contribute to the Zn(2+) site. Positions 319 and 328 each coordinate L-valine. 6 residues coordinate Zn(2+): Cys389, Cys392, Cys461, Cys464, Cys502, and Cys504. Positions 550, 551, 553, 554, and 581 each coordinate L-isoleucyl-5'-AMP. A 'KMSKS' region motif is present at residues 591–595 (KMSKS). Lys594 is an ATP binding site.

Belongs to the class-I aminoacyl-tRNA synthetase family. IleS type 2 subfamily. As to quaternary structure, monomer. The cofactor is Zn(2+).

The protein resides in the cytoplasm. The catalysed reaction is tRNA(Ile) + L-isoleucine + ATP = L-isoleucyl-tRNA(Ile) + AMP + diphosphate. Catalyzes the attachment of isoleucine to tRNA(Ile). As IleRS can inadvertently accommodate and process structurally similar amino acids such as valine, to avoid such errors it has two additional distinct tRNA(Ile)-dependent editing activities. One activity is designated as 'pretransfer' editing and involves the hydrolysis of activated Val-AMP. The other activity is designated 'posttransfer' editing and involves deacylation of mischarged Val-tRNA(Ile). The sequence is that of Isoleucine--tRNA ligase (ileS) from Thermus thermophilus (strain ATCC 27634 / DSM 579 / HB8).